A 297-amino-acid polypeptide reads, in one-letter code: N-acetylneuraminate lyase (297 aa).

Aceneuramate-binding residues include Ser-47 and Thr-48. The active-site Proton donor is Tyr-137. Lys-165 acts as the Schiff-base intermediate with substrate in catalysis. Positions 167, 189, 191, 192, and 208 each coordinate aceneuramate.

The protein belongs to the DapA family. NanA subfamily. In terms of assembly, homotetramer.

It localises to the cytoplasm. The enzyme catalyses aceneuramate = aldehydo-N-acetyl-D-mannosamine + pyruvate. The protein operates within amino-sugar metabolism; N-acetylneuraminate degradation; D-fructose 6-phosphate from N-acetylneuraminate: step 1/5. Functionally, catalyzes the reversible aldol cleavage of N-acetylneuraminic acid (sialic acid; Neu5Ac) to form pyruvate and N-acetylmannosamine (ManNAc) via a Schiff base intermediate. The polypeptide is N-acetylneuraminate lyase (Salmonella paratyphi A (strain AKU_12601)).